Reading from the N-terminus, the 57-residue chain is Bowman-Birk type proteinase inhibitor B4 (57 aa).

4 disulfides stabilise this stretch: cysteine 6/cysteine 55, cysteine 12/cysteine 17, cysteine 26/cysteine 33, and cysteine 30/cysteine 47.

Belongs to the Bowman-Birk serine protease inhibitor family. As to expression, expressed in bulb (at protein level).

Serine protease inhibitor. Inhibits trypsin (Ki = 110 nM) and very weakly inhibits chymotrypsin (Ki =1200 nM). Does not inhibit bacterial subtilisin. The protein is Bowman-Birk type proteinase inhibitor B4 of Hyacinthus orientalis (Common hyacinth).